We begin with the raw amino-acid sequence, 892 residues long: Zinc finger protein 512B (892 aa).

The segment at 1 to 82 (MTDPFCVGGR…KKGRPKAENQ (82 aa)) is disordered. A compositionally biased stretch (low complexity) spans 8 to 19 (GGRRLPGSSKSG). A C2H2-type 1; atypical zinc finger spans residues 105 to 129 (VKCPNSGCWLEFPSIYGLKYHYQRC). The C2H2-type 2 zinc finger occupies 140–163 (FPCPFCEAAFTSKTQLEKHRIWNH). 2 disordered regions span residues 323–473 (MVLL…RKKV) and 562–582 (EHSAKPSDAEASEGGEQEERE). Polar residues predominate over residues 371–384 (SMGQSSAFQLSADT). Residues 385–398 (SSGSLSPGSRPSGG) show a composition bias toward low complexity. Serine 409 carries the post-translational modification Phosphoserine. A compositionally biased stretch (basic residues) spans 418-428 (TKHRRKQKTPK). A NuRD interaction motif motif is present at residues 421 to 427 (RRKQKTP). A C2H2-type 3 zinc finger spans residues 540–563 (LKCQHCRKQFKSKAGLNYHTMAEH). A C2H2-type 4; atypical zinc finger spans residues 594–618 (LRCPQEGCGAAFSSLMGYQYHQRRC). A C2H2-type 5 zinc finger spans residues 630-653 (FPCTHCGKTYRSKAGHDYHVRSEH). Residues 649 to 682 (VRSEHTAPPPEEPTDKSPEAEDPLGVERTPSGRV) are disordered. A Phosphoserine modification is found at serine 686. The C2H2-type 6; atypical zinc finger occupies 750–774 (VNCPNDCCEAIYSSVSGLKAHLASC). The C2H2-type 7 zinc-finger motif lies at 784–807 (YRCLLCPKEFSSESGVKYHILKTH). The segment at 812–892 (FRTSADPPPK…KVGVSKAPEK (81 aa)) is disordered. The span at 819–831 (PPKHRSQDSLVPK) shows a compositional bias: basic and acidic residues. Residues 832–849 (KEKKKNLAGGKKRGRKPK) are compositionally biased toward basic residues. A compositionally biased stretch (basic and acidic residues) spans 850-876 (ERTPEEPVAKLPPRRDDWPPGCRDKGA).

Belongs to the krueppel C2H2-type zinc-finger protein family. In terms of assembly, interacts (via its NuRD interaction motif) with RBBP4 of the nucleosome remodeling and deacetylase (NuRD) complex; the interaction is direct and may play a role in repressing gene expression.

It localises to the nucleus. In terms of biological role, involved in transcriptional regulation by repressing gene expression. Associates with the nucleosome remodeling and histone deacetylase (NuRD) complex, which promotes transcriptional repression by histone deacetylation and nucleosome remodeling. This chain is Zinc finger protein 512B (ZNF512B), found in Homo sapiens (Human).